The following is an 887-amino-acid chain: Beta-galactosidase 9 (887 aa).

A signal peptide spans 1-30 (MAESIRTFSLQWRILSLIIALLVYFPILSG). Asn-37 carries an N-linked (GlcNAc...) asparagine glycan. The active-site Proton donor is the Glu-194. Glu-263 serves as the catalytic Nucleophile. 5 N-linked (GlcNAc...) asparagine glycosylation sites follow: Asn-463, Asn-485, Asn-496, Asn-527, and Asn-785. The SUEL-type lectin domain maps to 791-877 (NSVAPEVHLH…KTLAVMSRCS (87 aa)). N-linked (GlcNAc...) asparagine glycosylation occurs at Asn-881.

The protein belongs to the glycosyl hydrolase 35 family. In terms of tissue distribution, ubiquitous, with higher expression levels in siliques.

The protein resides in the secreted. It localises to the extracellular space. The protein localises to the apoplast. The enzyme catalyses Hydrolysis of terminal non-reducing beta-D-galactose residues in beta-D-galactosides.. This is Beta-galactosidase 9 (BGAL9) from Arabidopsis thaliana (Mouse-ear cress).